The sequence spans 729 residues: Anti-bacteriophage protein B (729 aa).

Residues 109–271 (FDLLKSGQNV…KLGYPHTFVS (163 aa)) enclose the Helicase ATP-binding domain. 122 to 129 (APTSMGKS) is a binding site for ATP. One can recognise a Helicase C-terminal domain in the interval 297–472 (ALGEIAHACV…GIDTPINLLA (176 aa)).

The protein belongs to the helicase family. In terms of assembly, interacts with AbpB.

Part of an antiviral system composed of AbpA and AbpB; when both are expressed from a plasmid they confer resistance to phages T2, T4, T7 and lambda but not RB32 or RB69. Resistance is temperature dependent, it can be seen at 30 degrees Celsius but not at 37 or 42 degrees Celsius. The system impairs phage but not bacterial DNA synthesis (shown for T4, T7 and lambda). Partially suppressed by mutations in T4 gene 41, a replicative helicase. Its function is as follows. Deletion or mutations in this gene were selected in directed evolution experiments for resistance to intense ionizing radiation (3000 Gy). This Escherichia coli (strain K12) protein is Anti-bacteriophage protein B.